We begin with the raw amino-acid sequence, 117 residues long: Minor capsid protein p17 (117 aa).

N-linked (GlcNAc...) asparagine; by host glycosylation occurs at Asn12. The chain crosses the membrane as a helical span at residues 39–59; the sequence is AILLGILILLVIILIIVAIVY. Residues 96 to 117 are disordered; sequence KNSTSQQSHIPSDEQLAELAHS. N-linked (GlcNAc...) asparagine; by host glycosylation occurs at Asn97.

Belongs to the asfivirus minor capsid protein p17 family. Interacts with the minor capsid protein M1249L and with the hexon capsid protein p72 capsomers; these interactions form a rigid zipper structure that stabilizes the capsomers. Interacts with host STING1.

Its subcellular location is the virion membrane. It localises to the host endoplasmic reticulum membrane. Together with the penton and the other minor capsid proteins (M1249L, p49), forms a complicated network immediately below the outer capsid shell, stabilizing the whole capsid. Three copies of p17 encircle each p72 capsomer in the inner capsid shell, anchoring p72 capsomers on the inner membrane. Required for the assembly of the capsid and icosahedral morphogenesis. Additionally, inhibits the host cGAS-STING pathway through its interaction with STING1 and subsequent interference of the recruitment of downstream components TBK1 and IKBKE. The protein is Minor capsid protein p17 of African swine fever virus (isolate Tick/South Africa/Pretoriuskop Pr4/1996) (ASFV).